The primary structure comprises 217 residues: MPEFKIVISDPEAKADLPVYKVKVKGDESIEYGDDEKNQRKLPVCKLNPKLLEKLNAVHGIVTVRIRKEDRKFNYTCKATADANVPEDTVHVSLEWLGDKVGAEEAEGEVFRAKAWQITITSPAADQLIGLKIGDTFDGGLVGLPGYKLLIRGGSDNSGFPMLPSIPGPVKKRVLLSGPPGFHPREKGERRRKTVRGNTITHDIVQINTVIVYPKKE.

Belongs to the eukaryotic ribosomal protein eS6 family.

The polypeptide is Small ribosomal subunit protein eS6 (Hyperthermus butylicus (strain DSM 5456 / JCM 9403 / PLM1-5)).